A 1370-amino-acid polypeptide reads, in one-letter code: Histidine kinase P4 (1370 aa).

Positions 1-20 (MRNIGVFSVILFSFLAISLK) are cleaved as a signal peptide. The helical transmembrane segment at 799–819 (WAFCLYALCIGTALIALISFL) threads the bilayer. The Histidine kinase domain maps to 852–1072 (NISHEFRTPL…IFRVSLPLGR (221 aa)). His-855 carries the phosphohistidine; by autocatalysis modification. One can recognise a Response regulatory domain in the interval 1119 to 1234 (TILIVEDHKP…EFRLRIKNIL (116 aa)). At Asp-1167 the chain carries 4-aspartylphosphate. An HTH araC/xylS-type domain is found at 1266 to 1365 (KKAFKIVEDN…NETPSQYQNR (100 aa)). DNA-binding regions (H-T-H motif) lie at residues 1284-1305 (LAFS…KAWT) and 1332-1355 (ISQI…QKKF).

Post-translationally, autophosphorylated. Activation requires a sequential transfer of a phosphate group from a His in the primary transmitter domain, to an Asp in the receiver domain and to a His in the secondary transmitter domain.

Its subcellular location is the membrane. The protein resides in the cell surface. The enzyme catalyses ATP + protein L-histidine = ADP + protein N-phospho-L-histidine.. Functionally, histidine kinase probably involved in ulvan degradation. Ulvan is the main polysaccharide component of the Ulvales (green seaweed) cell wall. It is composed of disaccharide building blocks comprising 3-sulfated rhamnose (Rha3S) linked to D-glucuronic acid (GlcA), L-iduronic acid (IduA), or D-xylose (Xyl). The polypeptide is Histidine kinase P4 (Formosa agariphila (strain DSM 15362 / KCTC 12365 / LMG 23005 / KMM 3901 / M-2Alg 35-1)).